We begin with the raw amino-acid sequence, 351 residues long: Dihydroorotate dehydrogenase (quinone) (351 aa).

Residues 67–71 (AGFDK) and Thr-91 each bind FMN. Lys-71 serves as a coordination point for substrate. 116 to 120 (NAMGF) is a binding site for substrate. FMN contacts are provided by Asn-145 and Asn-178. Asn-178 contributes to the substrate binding site. The active-site Nucleophile is the Ser-181. Position 183 (Asn-183) interacts with substrate. FMN contacts are provided by Lys-214 and Thr-242. 243–244 (NT) provides a ligand contact to substrate. Residues Gly-262, Gly-291, and 312 to 313 (YS) each bind FMN.

This sequence belongs to the dihydroorotate dehydrogenase family. Type 2 subfamily. As to quaternary structure, monomer. FMN serves as cofactor.

The protein resides in the cell membrane. The catalysed reaction is (S)-dihydroorotate + a quinone = orotate + a quinol. It participates in pyrimidine metabolism; UMP biosynthesis via de novo pathway; orotate from (S)-dihydroorotate (quinone route): step 1/1. In terms of biological role, catalyzes the conversion of dihydroorotate to orotate with quinone as electron acceptor. This Helicobacter acinonychis (strain Sheeba) protein is Dihydroorotate dehydrogenase (quinone).